The sequence spans 102 residues: Small ribosomal subunit protein uS10m (102 aa).

It belongs to the universal ribosomal protein uS10 family.

The protein resides in the mitochondrion. In Marchantia polymorpha (Common liverwort), this protein is Small ribosomal subunit protein uS10m (RPS10).